The following is a 254-amino-acid chain: Methyltransferase-like protein 23 (254 aa).

The disordered stretch occupies residues 1-27 (MKSFIFRQNPRKQQQEQNNLVDYSDSD). Residues 11–21 (RKQQQEQNNLV) show a composition bias toward polar residues.

This sequence belongs to the methyltransferase superfamily. METTL23 family.

In terms of biological role, probable methyltransferase. The sequence is that of Methyltransferase-like protein 23 from Dictyostelium discoideum (Social amoeba).